The following is a 121-amino-acid chain: Large ribosomal subunit protein uL18 (121 aa).

The protein belongs to the universal ribosomal protein uL18 family. In terms of assembly, part of the 50S ribosomal subunit; part of the 5S rRNA/L5/L18/L25 subcomplex. Contacts the 5S and 23S rRNAs.

Functionally, this is one of the proteins that bind and probably mediate the attachment of the 5S RNA into the large ribosomal subunit, where it forms part of the central protuberance. This is Large ribosomal subunit protein uL18 from Leptothrix cholodnii (strain ATCC 51168 / LMG 8142 / SP-6) (Leptothrix discophora (strain SP-6)).